The sequence spans 715 residues: Elongation factor G (715 aa).

Residues 8–290 form the tr-type G domain; the sequence is NRYRNIGICA…AVIDFLPAPT (283 aa). GTP contacts are provided by residues 17–24, 88–92, and 142–145; these read AHVDAGKT, DTPGH, and NKMD.

Belongs to the TRAFAC class translation factor GTPase superfamily. Classic translation factor GTPase family. EF-G/EF-2 subfamily.

The protein resides in the cytoplasm. Catalyzes the GTP-dependent ribosomal translocation step during translation elongation. During this step, the ribosome changes from the pre-translocational (PRE) to the post-translocational (POST) state as the newly formed A-site-bound peptidyl-tRNA and P-site-bound deacylated tRNA move to the P and E sites, respectively. Catalyzes the coordinated movement of the two tRNA molecules, the mRNA and conformational changes in the ribosome. This Ectopseudomonas mendocina (strain ymp) (Pseudomonas mendocina) protein is Elongation factor G.